A 270-amino-acid polypeptide reads, in one-letter code: UPF0354 protein BcerKBAB4_4524 (270 aa).

This sequence belongs to the UPF0354 family.

This chain is UPF0354 protein BcerKBAB4_4524, found in Bacillus mycoides (strain KBAB4) (Bacillus weihenstephanensis).